The primary structure comprises 322 residues: 4-diphosphocytidyl-2-C-methyl-D-erythritol kinase (322 aa).

Residue Lys18 is part of the active site. 130–140 (PMGAGLGGGSS) serves as a coordination point for ATP. Residue Asp172 is part of the active site.

The protein belongs to the GHMP kinase family. IspE subfamily.

It catalyses the reaction 4-CDP-2-C-methyl-D-erythritol + ATP = 4-CDP-2-C-methyl-D-erythritol 2-phosphate + ADP + H(+). It functions in the pathway isoprenoid biosynthesis; isopentenyl diphosphate biosynthesis via DXP pathway; isopentenyl diphosphate from 1-deoxy-D-xylulose 5-phosphate: step 3/6. Functionally, catalyzes the phosphorylation of the position 2 hydroxy group of 4-diphosphocytidyl-2C-methyl-D-erythritol. In Psychrobacter cryohalolentis (strain ATCC BAA-1226 / DSM 17306 / VKM B-2378 / K5), this protein is 4-diphosphocytidyl-2-C-methyl-D-erythritol kinase.